The following is a 340-amino-acid chain: uncharacterized protein (340 aa).

The next 2 helical transmembrane spans lie at Pro-162 to Gly-182 and Phe-239 to Pro-259.

The protein localises to the cell membrane. This is an uncharacterized protein from Mycobacterium bovis (strain ATCC BAA-935 / AF2122/97).